Here is a 469-residue protein sequence, read N- to C-terminus: NADH-quinone oxidoreductase subunit 13 (469 aa).

Helical transmembrane passes span 1 to 21, 23 to 43, 47 to 67, 69 to 89, 91 to 111, 115 to 135, 144 to 164, 190 to 210, 258 to 278, 284 to 304, 308 to 328, 354 to 374, 390 to 410, and 430 to 450; these read MVVL…LGLP, ALGV…FLTH, VAHA…AFGL, GLSA…ALVA, VEGR…GLFA, LLVF…MLYL, ALYT…AAVL, AFWV…LFPL, GLLL…AFAA, LLAY…FSGT, AMGG…LFLL, LAAL…LSGF, WLAA…LTAF, and WGFA…PGYF.

This sequence belongs to the complex I subunit 4 family. NDH-1 is composed of 15 different subunits, Nqo1 to Nqo15. The complex has a L-shaped structure, with the hydrophobic arm (subunits Nqo7, Nqo8 and Nqo10 to Nqo14) embedded in the membrane and the hydrophilic peripheral arm (subunits Nqo1 to Nqo6, Nqo9 and Nqo15) protruding into the bacterial cytoplasm. The hydrophilic domain contains all the redox centers.

Its subcellular location is the cell inner membrane. The enzyme catalyses a quinone + NADH + 5 H(+)(in) = a quinol + NAD(+) + 4 H(+)(out). In terms of biological role, NDH-1 shuttles electrons from NADH, via FMN and iron-sulfur (Fe-S) centers, to quinones in the respiratory chain. The immediate electron acceptor for the enzyme in this species is menaquinone. Couples the redox reaction to proton translocation (for every two electrons transferred, four hydrogen ions are translocated across the cytoplasmic membrane), and thus conserves the redox energy in a proton gradient required for the synthesis of ATP. The chain is NADH-quinone oxidoreductase subunit 13 (nqo13) from Thermus thermophilus (strain ATCC 27634 / DSM 579 / HB8).